Reading from the N-terminus, the 63-residue chain is Large ribosomal subunit protein uL29 (63 aa).

The protein belongs to the universal ribosomal protein uL29 family.

The protein is Large ribosomal subunit protein uL29 of Haemophilus influenzae (strain 86-028NP).